Consider the following 553-residue polypeptide: Phenylalanine--tRNA ligase beta subunit (553 aa).

Positions 273-349 constitute a B5 domain; the sequence is FNVRNIDIEV…RAFGYNNITP (77 aa). Mg(2+)-binding residues include Asp327, Asp333, Asp336, and Asp337.

It belongs to the phenylalanyl-tRNA synthetase beta subunit family. Type 2 subfamily. Tetramer of two alpha and two beta subunits. It depends on Mg(2+) as a cofactor.

The protein resides in the cytoplasm. It carries out the reaction tRNA(Phe) + L-phenylalanine + ATP = L-phenylalanyl-tRNA(Phe) + AMP + diphosphate + H(+). The sequence is that of Phenylalanine--tRNA ligase beta subunit from Methanocella arvoryzae (strain DSM 22066 / NBRC 105507 / MRE50).